A 379-amino-acid polypeptide reads, in one-letter code: Cytochrome bd-I ubiquinol oxidase subunit 2 (379 aa).

N-formylmethionine is present on methionine 1. Topologically, residues 1 to 8 (MIDYEVLR) are cytoplasmic. Residues 9–28 (FIWWLLVGVLLIGFAVTDGF) form a helical membrane-spanning segment. At 29-79 (DMGVGMLTRFLGRNDTERRIMINSIAPHWDGNQVWLITAGGALFAAWPMVY) the chain is on the periplasmic side. Residues 80 to 99 (AAAFSGFYVAMILVLASLFF) traverse the membrane as a helical segment. Topologically, residues 100–122 (RPVGFDYRSKIEETRWRNMWDWG) are cytoplasmic. The chain crosses the membrane as a helical span at residues 123–142 (IFIGSFVPPLVIGVAFGNLL). Residues 143–164 (QGVPFNVDEYLRLYYTGNFFQL) lie on the Periplasmic side of the membrane. Residues 165–184 (LNPFGLLAGVVSVGMIITQG) form a helical membrane-spanning segment. At 185 to 205 (ATYLQMRTVGELHLRTRATAQ) the chain is on the cytoplasmic side. The helical transmembrane segment at 206–225 (VAALVTLVCFALAGVWVMYG) threads the bilayer. Residues 226 to 262 (IDGYVVKSTMDHYAASNPLNKEVVREAGAWLVNFNNT) are Periplasmic-facing. Residues 263–282 (PILWAIPALGVVLPLLTILT) form a helical membrane-spanning segment. The Cytoplasmic portion of the chain corresponds to 283–292 (ARMDKAAWAF). Residues 293–312 (VFSSLTLACIILTAGIAMFP) traverse the membrane as a helical segment. Residues 313–336 (FVMPSSTMMNASLTMWDATSSQLT) are Periplasmic-facing. The helical transmembrane segment at 337–356 (LNVMTWVAVVLVPIILLYTA) threads the bilayer. Residues 357–379 (WCYWKMFGRITKEDIERNTHSLY) lie on the Cytoplasmic side of the membrane.

It belongs to the cytochrome ubiquinol oxidase subunit 2 family. As to quaternary structure, heterodimer of subunits I and II. Requires heme b as cofactor. Heme d cis-diol is required as a cofactor.

It is found in the cell inner membrane. The catalysed reaction is 2 a ubiquinol + O2(in) + 4 H(+)(in) = 2 a ubiquinone + 2 H2O(in) + 4 H(+)(out). The protein operates within energy metabolism; oxidative phosphorylation. In terms of biological role, a terminal oxidase that produces a proton motive force by the vectorial transfer of protons across the inner membrane. It is the component of the aerobic respiratory chain of E.coli that predominates when cells are grown at low aeration. Generates a proton motive force using protons and electrons from opposite sides of the membrane to generate H(2)O, transferring 1 proton/electron. The polypeptide is Cytochrome bd-I ubiquinol oxidase subunit 2 (cydB) (Escherichia coli O157:H7).